Consider the following 118-residue polypeptide: Large ribosomal subunit protein uL24 (118 aa).

This sequence belongs to the universal ribosomal protein uL24 family. Part of the 50S ribosomal subunit.

In terms of biological role, one of two assembly initiator proteins, it binds directly to the 5'-end of the 23S rRNA, where it nucleates assembly of the 50S subunit. Functionally, one of the proteins that surrounds the polypeptide exit tunnel on the outside of the subunit. This is Large ribosomal subunit protein uL24 from Synechococcus sp. (strain CC9902).